Reading from the N-terminus, the 266-residue chain is Beta-lactamase OXA-10 (266 aa).

The N-terminal stretch at 1-19 (MKTFAAYVIIACLSSTALA) is a signal peptide. Cys44 and Cys51 are joined by a disulfide. Catalysis depends on Ser67, which acts as the Acyl-ester intermediate. The residue at position 70 (Lys70) is an N6-carboxylysine. The a beta-lactam site is built by Ser115, Thr206, Phe208, and Arg250.

The protein belongs to the class-D beta-lactamase family. Dimer.

It is found in the periplasm. It catalyses the reaction a beta-lactam + H2O = a substituted beta-amino acid. Its activity is regulated as follows. Activated, with respect to most beta-lactam substrates, in the presence of 0.05 M sodium bicarbonate. Functionally, class D beta-lactamase which confers resistance to the beta-lactam antibiotics, including penicillin, carbenicillin and oxacillin, and also some cephalosporins. Confers weak resistance to some carbapenems, in E.coli strain C600Z1. Acts via hydrolysis of the beta-lactam ring. Has penicillin- and cephalosporin-hydrolyzing activities. This Pseudomonas aeruginosa protein is Beta-lactamase OXA-10.